The following is a 271-amino-acid chain: Tryptophan synthase alpha chain (271 aa).

Residues glutamate 49 and aspartate 60 each act as proton acceptor in the active site.

This sequence belongs to the TrpA family. As to quaternary structure, tetramer of two alpha and two beta chains.

The catalysed reaction is (1S,2R)-1-C-(indol-3-yl)glycerol 3-phosphate + L-serine = D-glyceraldehyde 3-phosphate + L-tryptophan + H2O. The protein operates within amino-acid biosynthesis; L-tryptophan biosynthesis; L-tryptophan from chorismate: step 5/5. Functionally, the alpha subunit is responsible for the aldol cleavage of indoleglycerol phosphate to indole and glyceraldehyde 3-phosphate. The chain is Tryptophan synthase alpha chain from Burkholderia pseudomallei (strain 1106a).